The primary structure comprises 311 residues: Mycinamicin-resistance protein MyrB (311 aa).

5 residues coordinate S-adenosyl-L-methionine: N27, L29, G54, E75, and D98. The interval 272–311 (PAPAGRSVRARPGSVGPDRSLPPRGLRSGPPRARRRGGGA) is disordered. A compositionally biased stretch (low complexity) spans 293–302 (PPRGLRSGPP).

It belongs to the class I-like SAM-binding methyltransferase superfamily. rRNA adenine N(6)-methyltransferase family.

Functionally, confers resistance to macrolide, lincosamide and streptogramin B antibiotics. The chain is Mycinamicin-resistance protein MyrB (myrB) from Micromonospora griseorubida.